Consider the following 99-residue polypeptide: Acylphosphatase (99 aa).

In terms of domain architecture, Acylphosphatase-like spans Ala11–Pro97. Catalysis depends on residues Arg26 and Asn44.

The protein belongs to the acylphosphatase family.

It carries out the reaction an acyl phosphate + H2O = a carboxylate + phosphate + H(+). In Rhizorhabdus wittichii (strain DSM 6014 / CCUG 31198 / JCM 15750 / NBRC 105917 / EY 4224 / RW1) (Sphingomonas wittichii), this protein is Acylphosphatase (acyP).